Reading from the N-terminus, the 472-residue chain is MVNLVIVSHSARLGEGVGELARQMLMNDGCKLAIAAGIDDPASPIGTDPIKVMEAIESVADADHILVMMDIGSALLSAETALDLLDPAIAAKVRLCAAPLVEGTLAATVSAAAGAGIDKVIEDAMNALEAKRVQLGLPSQPQHASLTAAPVDDRDARSVSVVIQNHNGLHVRPASKLVAALAGFNADLVLEKGGKCVTPDSLNQIALLQVRRNDTLRLLARGPDADAALAAFQALAAENFGEPTEAAPARRPASADRVEGKVVLYPQPQDRISRETSAAIGQQQLRLKRAIDRTLEDLSALTTLAEATFSADIAAIFSGHHTLLDDPDLYAAACDIIRDEQCSAAWAWQQVLSDLSQQYRHLDDAYLQARYIDIEDILHRTLRHLNERNEALPQFSAPSILVADDIFPSTVLQLNAEQVKGICLQAGSELSHGAIIARQAGIAMLCQQSDALTLQDGENVILDIPGKRVIRG.

In terms of domain architecture, PTS EIIA type-4 spans 1–135 (MVNLVIVSHS…NALEAKRVQL (135 aa)). Histidine 9 acts as the Tele-phosphohistidine intermediate in catalysis. The region spanning 156-243 (ARSVSVVIQN…ALAAENFGEP (88 aa)) is the HPr domain. The active-site Pros-phosphohistidine intermediate is the histidine 170. A PTS EI-like, N-terminal part region spans residues 266 to 472 (PQPQDRISRE…DIPGKRVIRG (207 aa)). Residue histidine 432 is the Tele-phosphohistidine intermediate of the active site.

It belongs to the PEP-utilizing enzyme family. In terms of assembly, homodimer. The dihydroxyacetone kinase complex is composed of a homodimer of DhaM, a homodimer of DhaK and the subunit DhaL.

It catalyses the reaction dihydroxyacetone + phosphoenolpyruvate = dihydroxyacetone phosphate + pyruvate. Its function is as follows. Component of the dihydroxyacetone kinase complex, which is responsible for the phosphoenolpyruvate (PEP)-dependent phosphorylation of dihydroxyacetone. DhaM serves as the phosphoryl donor. Is phosphorylated by phosphoenolpyruvate in an EI- and HPr-dependent reaction, and a phosphorelay system on histidine residues finally leads to phosphoryl transfer to DhaL and dihydroxyacetone. The sequence is that of PEP-dependent dihydroxyacetone kinase, phosphoryl donor subunit DhaM from Klebsiella michiganensis (strain ATCC 8724 / DSM 4798 / JCM 20051 / NBRC 3318 / NRRL B-199 / KCTC 1686 / BUCSAV 143 / CCM 1901).